Consider the following 72-residue polypeptide: uncharacterized protein (72 aa).

It belongs to the ycf76 family.

It is found in the plastid. Its subcellular location is the chloroplast. This is an uncharacterized protein from Oryza nivara (Indian wild rice).